Reading from the N-terminus, the 463-residue chain is MAALRVLCGLRGVAAQVLRPGAGVRLPIQPSRGVRQWQPDVEWAQQFGGAVMYPSKETAHWKPPPWNDVDPPKDTIVKNMTLNFGPQHPAAHGVLRLVMELSGEMVRKCDPHIGLLHRGTEKLIEYKTYLQALPYFDRLDYVSMMCNEQAYSLAVEKLLNIRPPPRAQWIRVLFGEITRLLNHIMAVTTHALDLGAMTPFFWLFEEREKMFEFYERVSGARMHAAYIRPGGVHQDLPLGLMDDIYQFSKNFSLRLDELEELLTNNRIWRNRTIDIGVVTAEEALNYGFSGVMLRGSGIQWDLRKTQPYDVYDQVEFDVPVGSRGDCYDRYLCRVEEMRQSLRIIAQCLNKMPPGEIKVDDAKVSPPKRAEMKTSMESLIHHFKLYTEGYQVPPGATYTAIEAPKGEFGVYLVSDGSSRPYRCKIKAPGFAHLAGLDKMSKGHMLADVVAIIGTQDIVFGEVDR.

The transit peptide at 1–33 (MAALRVLCGLRGVAAQVLRPGAGVRLPIQPSRG) directs the protein to the mitochondrion. The residue at position 62 (K62) is an N6-acetyllysine. The residue at position 118 (R118) is a Symmetric dimethylarginine. Positions 326, 332, and 347 each coordinate [4Fe-4S] cluster.

Belongs to the complex I 49 kDa subunit family. In terms of assembly, core subunit of respiratory chain NADH dehydrogenase (Complex I) which is composed of 45 different subunits. Component of the iron-sulfur (IP) fragment of the enzyme. Interacts with NDUFAF3. Interacts with NDUFAF7. Interacts with CERS2. [4Fe-4S] cluster is required as a cofactor. Dimethylation at Arg-118 by NDUFAF7 takes place after NDUFS2 assembles into the complex I, leading to stabilize the early intermediate complex.

Its subcellular location is the mitochondrion inner membrane. It catalyses the reaction a ubiquinone + NADH + 5 H(+)(in) = a ubiquinol + NAD(+) + 4 H(+)(out). Functionally, core subunit of the mitochondrial membrane respiratory chain NADH dehydrogenase (Complex I) which catalyzes electron transfer from NADH through the respiratory chain, using ubiquinone as an electron acceptor. Essential for the catalytic activity and assembly of complex I. Redox-sensitive, critical component of the oxygen-sensing pathway in the pulmonary vasculature which plays a key role in acute pulmonary oxygen-sensing and hypoxic pulmonary vasoconstriction. Plays an important role in carotid body sensing of hypoxia. Essential for glia-like neural stem and progenitor cell proliferation, differentiation and subsequent oligodendrocyte or neuronal maturation. This is NADH dehydrogenase [ubiquinone] iron-sulfur protein 2, mitochondrial (NDUFS2) from Gorilla gorilla gorilla (Western lowland gorilla).